Consider the following 150-residue polypeptide: Arginine repressor (150 aa).

This sequence belongs to the ArgR family.

It localises to the cytoplasm. The protein operates within amino-acid biosynthesis; L-arginine biosynthesis [regulation]. Functionally, regulates arginine biosynthesis genes. The chain is Arginine repressor from Ruminiclostridium cellulolyticum (strain ATCC 35319 / DSM 5812 / JCM 6584 / H10) (Clostridium cellulolyticum).